The following is a 123-amino-acid chain: Fluoride-specific ion channel FluC (123 aa).

Transmembrane regions (helical) follow at residues 5 to 25 (IIAL…YISG), 35 to 55 (IGTL…YGLL), 67 to 87 (IFLG…SYET), and 100 to 120 (FANI…GFIL). The Na(+) site is built by Gly-75 and Ser-78.

The protein belongs to the fluoride channel Fluc/FEX (TC 1.A.43) family.

The protein resides in the cell membrane. It carries out the reaction fluoride(in) = fluoride(out). Its activity is regulated as follows. Na(+) is not transported, but it plays an essential structural role and its presence is essential for fluoride channel function. Functionally, fluoride-specific ion channel. Important for reducing fluoride concentration in the cell, thus reducing its toxicity. The chain is Fluoride-specific ion channel FluC from Pyrococcus horikoshii (strain ATCC 700860 / DSM 12428 / JCM 9974 / NBRC 100139 / OT-3).